The sequence spans 68 residues: Conotoxin Mi11.1 (68 aa).

The first 26 residues, 1-26, serve as a signal peptide directing secretion; that stretch reads MMLRLTSVSCFLLVIACLNLFQVVLT. 4 disulfide bridges follow: C29–C43, C36–C48, C42–C52, and C47–C56. Position 60 is a tyrosine amide (Y60). A propeptide spanning residues 64–68 is cleaved from the precursor; that stretch reads ATFQE.

It belongs to the conotoxin I2 superfamily. As to expression, expressed by the venom duct.

Its subcellular location is the secreted. In Conus miles (Soldier cone), this protein is Conotoxin Mi11.1.